Reading from the N-terminus, the 120-residue chain is Aspartate 1-decarboxylase (120 aa).

The active-site Schiff-base intermediate with substrate; via pyruvic acid is Ser25. Ser25 is subject to Pyruvic acid (Ser). Thr57 is a substrate binding site. Catalysis depends on Tyr58, which acts as the Proton donor. 73–75 (GAA) is a binding site for substrate.

This sequence belongs to the PanD family. As to quaternary structure, heterooctamer of four alpha and four beta subunits. Pyruvate serves as cofactor. In terms of processing, is synthesized initially as an inactive proenzyme, which is activated by self-cleavage at a specific serine bond to produce a beta-subunit with a hydroxyl group at its C-terminus and an alpha-subunit with a pyruvoyl group at its N-terminus.

Its subcellular location is the cytoplasm. It carries out the reaction L-aspartate + H(+) = beta-alanine + CO2. The protein operates within cofactor biosynthesis; (R)-pantothenate biosynthesis; beta-alanine from L-aspartate: step 1/1. Catalyzes the pyruvoyl-dependent decarboxylation of aspartate to produce beta-alanine. This is Aspartate 1-decarboxylase from Deinococcus radiodurans (strain ATCC 13939 / DSM 20539 / JCM 16871 / CCUG 27074 / LMG 4051 / NBRC 15346 / NCIMB 9279 / VKM B-1422 / R1).